The primary structure comprises 197 residues: Dephospho-CoA kinase (197 aa).

The 195-residue stretch at 3–197 (VLGLTGSIGL…IDELRGQRGS (195 aa)) folds into the DPCK domain. An ATP-binding site is contributed by 11 to 16 (GLGKST).

This sequence belongs to the CoaE family.

It localises to the cytoplasm. The catalysed reaction is 3'-dephospho-CoA + ATP = ADP + CoA + H(+). The protein operates within cofactor biosynthesis; coenzyme A biosynthesis; CoA from (R)-pantothenate: step 5/5. Its function is as follows. Catalyzes the phosphorylation of the 3'-hydroxyl group of dephosphocoenzyme A to form coenzyme A. This chain is Dephospho-CoA kinase, found in Mesorhizobium japonicum (strain LMG 29417 / CECT 9101 / MAFF 303099) (Mesorhizobium loti (strain MAFF 303099)).